Here is a 63-residue protein sequence, read N- to C-terminus: Beta-glucosidase A-3 (63 aa).

Residue aspartate 12 is part of the active site. N-linked (GlcNAc...) asparagine glycosylation is found at asparagine 48 and asparagine 56.

The protein belongs to the glycosyl hydrolase 3 family.

The catalysed reaction is Hydrolysis of terminal, non-reducing beta-D-glucosyl residues with release of beta-D-glucose.. The protein operates within glycan metabolism; cellulose degradation. This Aspergillus wentii protein is Beta-glucosidase A-3.